A 375-amino-acid polypeptide reads, in one-letter code: Succinyl-diaminopimelate desuccinylase (375 aa).

Zn(2+) is bound at residue histidine 66. Residue aspartate 68 is part of the active site. Residue aspartate 99 coordinates Zn(2+). Residue glutamate 133 is the Proton acceptor of the active site. The Zn(2+) site is built by glutamate 134, glutamate 162, and histidine 348.

The protein belongs to the peptidase M20A family. DapE subfamily. As to quaternary structure, homodimer. Zn(2+) is required as a cofactor. It depends on Co(2+) as a cofactor.

The catalysed reaction is N-succinyl-(2S,6S)-2,6-diaminopimelate + H2O = (2S,6S)-2,6-diaminopimelate + succinate. It participates in amino-acid biosynthesis; L-lysine biosynthesis via DAP pathway; LL-2,6-diaminopimelate from (S)-tetrahydrodipicolinate (succinylase route): step 3/3. In terms of biological role, catalyzes the hydrolysis of N-succinyl-L,L-diaminopimelic acid (SDAP), forming succinate and LL-2,6-diaminopimelate (DAP), an intermediate involved in the bacterial biosynthesis of lysine and meso-diaminopimelic acid, an essential component of bacterial cell walls. This Aeromonas salmonicida (strain A449) protein is Succinyl-diaminopimelate desuccinylase.